Reading from the N-terminus, the 142-residue chain is Large ribosomal subunit protein uL13 (142 aa).

The protein belongs to the universal ribosomal protein uL13 family. As to quaternary structure, part of the 50S ribosomal subunit.

This protein is one of the early assembly proteins of the 50S ribosomal subunit, although it is not seen to bind rRNA by itself. It is important during the early stages of 50S assembly. This is Large ribosomal subunit protein uL13 from Aeromonas hydrophila subsp. hydrophila (strain ATCC 7966 / DSM 30187 / BCRC 13018 / CCUG 14551 / JCM 1027 / KCTC 2358 / NCIMB 9240 / NCTC 8049).